A 373-amino-acid polypeptide reads, in one-letter code: Enoyl-[acyl-carrier-protein] reductase, mitochondrial (373 aa).

The transit peptide at 1–53 (MWVCSTLWRVRTPARQWRGLLPASGCHGPAASSYSASAEPARVRALVYGHHGD) directs the protein to the mitochondrion. Lys61 is modified (N6-acetyllysine; alternate). Lys61 is modified (N6-succinyllysine; alternate). The Proton donor role is filled by Tyr94. NADP(+) is bound by residues Asn167, 193-196 (NSGV), and 216-218 (RDR). Residues Lys252 and Lys267 each carry the N6-acetyllysine; alternate modification. N6-succinyllysine; alternate is present on residues Lys252 and Lys267. NADP(+) is bound by residues 285–288 (YGGM) and 310–312 (FWL). Position 316 is an N6-succinyllysine (Lys316). Lys368 is an NADP(+) binding site.

It belongs to the zinc-containing alcohol dehydrogenase family. Quinone oxidoreductase subfamily. Homodimer. Isoform 2 interacts with PPARA in the nucleus and increases its activity. In terms of tissue distribution, highly expressed in skeletal and heart muscle. Expressed at lower level in placenta, liver, kidney and pancreas. Weakly or not expressed in lung.

The protein resides in the mitochondrion. Its subcellular location is the cytoplasm. It localises to the nucleus. The catalysed reaction is a 2,3-saturated acyl-[ACP] + NADP(+) = a (2E)-enoyl-[ACP] + NADPH + H(+). It catalyses the reaction (2E)-butenoyl-[ACP] + NADPH + H(+) = butanoyl-[ACP] + NADP(+). It carries out the reaction (2E)-hexenoyl-[ACP] + NADPH + H(+) = hexanoyl-[ACP] + NADP(+). The enzyme catalyses (2E)-octenoyl-[ACP] + NADPH + H(+) = octanoyl-[ACP] + NADP(+). The catalysed reaction is (2E)-decenoyl-[ACP] + NADPH + H(+) = decanoyl-[ACP] + NADP(+). It catalyses the reaction (2E)-dodecenoyl-[ACP] + NADPH + H(+) = dodecanoyl-[ACP] + NADP(+). It carries out the reaction (2E)-tetradecenoyl-[ACP] + NADPH + H(+) = tetradecanoyl-[ACP] + NADP(+). The enzyme catalyses (2E)-hexadecenoyl-[ACP] + NADPH + H(+) = hexadecanoyl-[ACP] + NADP(+). Functionally, catalyzes the NADPH-dependent reduction of trans-2-enoyl thioesters in mitochondrial fatty acid synthesis (fatty acid synthesis type II). Fatty acid chain elongation in mitochondria uses acyl carrier protein (ACP) as an acyl group carrier, but the enzyme accepts both ACP and CoA thioesters as substrates in vitro. Displays a preference for medium-chain over short- and long-chain substrates. May provide the octanoyl chain used for lipoic acid biosynthesis, regulating protein lipoylation and mitochondrial respiratory activity particularly in Purkinje cells. Involved in iron homeostasis; affecting Fe-S cluster assembly and ceramide metabolism. Required for proper morphology and bioenergetic functions of mitochondria. Required for maintenance of neurons. This Homo sapiens (Human) protein is Enoyl-[acyl-carrier-protein] reductase, mitochondrial (MECR).